The sequence spans 238 residues: Ribonuclease PH (238 aa).

Phosphate-binding positions include Arg86 and 124 to 126 (GTR).

It belongs to the RNase PH family. As to quaternary structure, homohexameric ring arranged as a trimer of dimers.

The enzyme catalyses tRNA(n+1) + phosphate = tRNA(n) + a ribonucleoside 5'-diphosphate. Phosphorolytic 3'-5' exoribonuclease that plays an important role in tRNA 3'-end maturation. Removes nucleotide residues following the 3'-CCA terminus of tRNAs; can also add nucleotides to the ends of RNA molecules by using nucleoside diphosphates as substrates, but this may not be physiologically important. Probably plays a role in initiation of 16S rRNA degradation (leading to ribosome degradation) during starvation. The polypeptide is Ribonuclease PH (Haemophilus influenzae (strain PittGG)).